The primary structure comprises 681 residues: U3 small nucleolar ribonucleoprotein protein MPP10 (681 aa).

Residues S61, S120, and S140 each carry the phosphoserine modification. Positions 109–139 (ECEDEECEEDASEVEADNQENLETDLDEEQL) form a coiled coil. Positions 111 to 144 (EDEECEEDASEVEADNQENLETDLDEEQLSDEGG) are enriched in acidic residues. Disordered stretches follow at residues 111–202 (EDEE…SVVD), 215–256 (LEKV…GRQK), and 268–365 (YKDF…EKRQ). Residues 145-163 (DVPKGRDRAKSSRKSDPRK) show a composition bias toward basic and acidic residues. Residues S164, S168, and S172 each carry the phosphoserine modification. Positions 215–227 (LEKVEKEEEKRPD) are enriched in basic and acidic residues. Composition is skewed to acidic residues over residues 228 to 248 (GEEE…DESE) and 273 to 322 (DPVE…EDEN). Phosphoserine occurs at positions 244, 247, 277, and 346. Positions 349-383 (AVKQESDEVKSSFEKRQEKMNEKIASLEKELLDKK) form a coiled coil. A Glycyl lysine isopeptide (Lys-Gly) (interchain with G-Cter in SUMO2) cross-link involves residue K351. Over residues 352–365 (QESDEVKSSFEKRQ) the composition is skewed to basic and acidic residues. Residues K383 and K395 each participate in a glycyl lysine isopeptide (Lys-Gly) (interchain with G-Cter in SUMO2) cross-link. Residues 471-491 (AEIYEQEYLKLNQQKTEEEDN) are a coiled coil. Residue K556 forms a Glycyl lysine isopeptide (Lys-Gly) (interchain with G-Cter in SUMO2) linkage. A compositionally biased stretch (basic and acidic residues) spans 560–576 (KAGDLKTAAEKTATDKK). Positions 560–644 (KAGDLKTAAE…RKDKPLKSSQ (85 aa)) are disordered. Residues 575-604 (KKRERRKKKYQKRLKIKEKEKRKKLLEKNN) adopt a coiled-coil conformation. Residues 577-599 (RERRKKKYQKRLKIKEKEKRKKL) show a composition bias toward basic residues. Residue K609 is modified to N6-acetyllysine. A compositionally biased stretch (basic and acidic residues) spans 630 to 640 (LLKDERKDKPL). Residues K632 and K649 each participate in a glycyl lysine isopeptide (Lys-Gly) (interchain with G-Cter in SUMO2) cross-link. A disordered region spans residues 657–681 (QINDAKQPEKIKKKKQDISVHKLKL). The span at 662 to 681 (KQPEKIKKKKQDISVHKLKL) shows a compositional bias: basic and acidic residues.

The protein belongs to the MPP10 family. In terms of assembly, part of the small subunit (SSU) processome, composed of more than 70 proteins and the RNA chaperone small nucleolar RNA (snoRNA) U3. Component of a heterotrimeric complex containing IMP3, IMP4 and MPHOSPH10. Interacts with IMP3 and IMP4. Phosphorylated in M (mitotic) phase.

Its subcellular location is the nucleus. It localises to the nucleolus. The protein localises to the chromosome. Its function is as follows. Component of the 60-80S U3 small nucleolar ribonucleoprotein (U3 snoRNP). Required for the early cleavages during pre-18S ribosomal RNA processing. Part of the small subunit (SSU) processome, first precursor of the small eukaryotic ribosomal subunit. During the assembly of the SSU processome in the nucleolus, many ribosome biogenesis factors, an RNA chaperone and ribosomal proteins associate with the nascent pre-rRNA and work in concert to generate RNA folding, modifications, rearrangements and cleavage as well as targeted degradation of pre-ribosomal RNA by the RNA exosome. In Mus musculus (Mouse), this protein is U3 small nucleolar ribonucleoprotein protein MPP10 (Mphosph10).